The sequence spans 317 residues: Protoheme IX farnesyltransferase (317 aa).

Helical transmembrane passes span 36–56 (VMVLVIFTALVGMVVSDATVN), 57–77 (PVIAAISLLMIAVGAGASGCL), 108–128 (LAFGIVLSVGSVLILGLASNW), 129–149 (LAAGLLAFTIVFYAVIYSMWL), 157–177 (IVIGGAAGALPPVVGQAAVTG), 184–204 (LVLFAIIFIWTPPHFWALALV), 230–247 (IIWYSLVLAPLALLPVWL), 251–273 (GWLYAVVGVLGGLGMLAGAVQVY), and 284–304 (AAMGLFAFSILYLFLLFSALL).

This sequence belongs to the UbiA prenyltransferase family. Protoheme IX farnesyltransferase subfamily.

Its subcellular location is the cell inner membrane. It catalyses the reaction heme b + (2E,6E)-farnesyl diphosphate + H2O = Fe(II)-heme o + diphosphate. The protein operates within porphyrin-containing compound metabolism; heme O biosynthesis; heme O from protoheme: step 1/1. In terms of biological role, converts heme B (protoheme IX) to heme O by substitution of the vinyl group on carbon 2 of heme B porphyrin ring with a hydroxyethyl farnesyl side group. This is Protoheme IX farnesyltransferase from Methylorubrum extorquens (strain CM4 / NCIMB 13688) (Methylobacterium extorquens).